A 223-amino-acid chain; its full sequence is Uracil-DNA glycosylase (223 aa).

D64 serves as the catalytic Proton acceptor.

This sequence belongs to the uracil-DNA glycosylase (UDG) superfamily. UNG family.

The protein localises to the cytoplasm. It carries out the reaction Hydrolyzes single-stranded DNA or mismatched double-stranded DNA and polynucleotides, releasing free uracil.. Functionally, excises uracil residues from the DNA which can arise as a result of misincorporation of dUMP residues by DNA polymerase or due to deamination of cytosine. This Desulfitobacterium hafniense (strain DSM 10664 / DCB-2) protein is Uracil-DNA glycosylase.